A 789-amino-acid polypeptide reads, in one-letter code: Isoamylase SU1, chloroplastic (789 aa).

A chloroplast-targeting transit peptide spans 1–44; sequence MAQQLPCVSSPRPLLAVPAGRWRAGVRGRPNVAGLGRGRLSLHA. The Nucleophile role is filled by Asp417. The Proton donor role is filled by Glu473.

Belongs to the glycosyl hydrolase 13 family.

It is found in the plastid. Its subcellular location is the chloroplast. It catalyses the reaction Hydrolysis of (1-&gt;6)-alpha-D-glucosidic branch linkages in glycogen, amylopectin and their beta-limit dextrins.. Its pathway is glycan biosynthesis; starch biosynthesis. Its function is as follows. Isoamylase starch-debranching enzyme involved in amylopectin biosynthesis in endosperm. Functions by removing excess branches or improper branches that interfere with the formation of double helices of the cluster chains of amylopectin and crystallization of starch. This Zea mays (Maize) protein is Isoamylase SU1, chloroplastic.